A 510-amino-acid polypeptide reads, in one-letter code: Ectonucleoside triphosphate diphosphohydrolase 1 (510 aa).

Residues 1-16 are Cytoplasmic-facing; sequence MEDRRESELKTFCSKN. The helical transmembrane segment at 17–37 threads the bilayer; sequence ILVILGFSSIIAVIALLALGL. Residues 38–477 are Extracellular-facing; it reads TQNKPLPENV…SSTRLSHSTY (440 aa). The N-linked (GlcNAc...) asparagine glycan is linked to Asn-73. Cysteines 84 and 108 form a disulfide. Glu-174 functions as the Proton acceptor in the catalytic mechanism. N-linked (GlcNAc...) asparagine glycans are attached at residues Asn-245, Asn-274, Asn-291, and Asn-333. 2 cysteine pairs are disulfide-bonded: Cys-255/Cys-300 and Cys-281/Cys-324. An intrachain disulfide couples Cys-337 to Cys-342. Asn-370 carries an N-linked (GlcNAc...) asparagine glycan. A disulfide bridge links Cys-390 with Cys-413. Asn-457 carries an N-linked (GlcNAc...) asparagine glycan. The helical transmembrane segment at 478–498 threads the bilayer; that stretch reads VFLMVLFSLILVIVVIIGLFV. Residues 499–510 are Cytoplasmic-facing; the sequence is CHRPSYFWKDMV.

This sequence belongs to the GDA1/CD39 NTPase family. As to quaternary structure, homodimer; disulfide-linked. It depends on Ca(2+) as a cofactor. Mg(2+) serves as cofactor. N-glycosylated. Post-translationally, cleaved into two polypeptides that seem to stay together by non-covalent interactions. In terms of processing, the N-terminus is blocked. Palmitoylated on Cys-13; which is required for caveola targeting. Highest expression found in vascular endothelium, smooth muscle, spleen and lung (at protein level). High expression also found in stomach, duodenum, kidney, lymph node and aorta (at protein level).

Its subcellular location is the membrane. It is found in the caveola. It catalyses the reaction a ribonucleoside 5'-triphosphate + 2 H2O = a ribonucleoside 5'-phosphate + 2 phosphate + 2 H(+). The enzyme catalyses a ribonucleoside 5'-triphosphate + H2O = a ribonucleoside 5'-diphosphate + phosphate + H(+). It carries out the reaction a ribonucleoside 5'-diphosphate + H2O = a ribonucleoside 5'-phosphate + phosphate + H(+). The catalysed reaction is ATP + 2 H2O = AMP + 2 phosphate + 2 H(+). It catalyses the reaction ATP + H2O = ADP + phosphate + H(+). The enzyme catalyses ADP + H2O = AMP + phosphate + H(+). It carries out the reaction CTP + 2 H2O = CMP + 2 phosphate + 2 H(+). The catalysed reaction is CTP + H2O = CDP + phosphate + H(+). It catalyses the reaction CDP + H2O = CMP + phosphate + H(+). The enzyme catalyses GTP + 2 H2O = GMP + 2 phosphate + 2 H(+). It carries out the reaction GTP + H2O = GDP + phosphate + H(+). The catalysed reaction is GDP + H2O = GMP + phosphate + H(+). It catalyses the reaction ITP + 2 H2O = IMP + 2 phosphate + 2 H(+). The enzyme catalyses ITP + H2O = IDP + phosphate + H(+). It carries out the reaction IDP + H2O = IMP + phosphate + H(+). The catalysed reaction is UTP + 2 H2O = UMP + 2 phosphate + 2 H(+). It catalyses the reaction UTP + H2O = UDP + phosphate + H(+). The enzyme catalyses UDP + H2O = UMP + phosphate + H(+). The ATP diphosphohydrolase activity is decreased by half by sodium azide. Catalyzes the hydrolysis of both di- and triphosphate nucleotides (NDPs and NTPs) and hydrolyze NTPs to nucleotide monophosphates (NMPs) in two distinct successive phosphate-releasing steps, with NDPs as intermediates and participates in the regulation of extracellular levels of nucleotides. By hydrolyzing proinflammatory ATP and platelet-activating ADP to AMP, it blocks platelet aggregation and supports blood flow. This is Ectonucleoside triphosphate diphosphohydrolase 1 from Sus scrofa (Pig).